The primary structure comprises 636 residues: Chaperone protein HtpG (636 aa).

The a; substrate-binding stretch occupies residues Met-1–Arg-349. The interval Glu-350–His-562 is b. Positions Met-563–Leu-636 are c.

Belongs to the heat shock protein 90 family. Homodimer.

It localises to the cytoplasm. Functionally, molecular chaperone. Has ATPase activity. The polypeptide is Chaperone protein HtpG (Aliarcobacter butzleri (strain RM4018) (Arcobacter butzleri)).